Consider the following 226-residue polypeptide: PKHD-type hydroxylase Nwi_0701 (226 aa).

A Fe2OG dioxygenase domain is found at K78 to S178. H96, D98, and H159 together coordinate Fe cation. Position 169 (R169) interacts with 2-oxoglutarate.

Fe(2+) serves as cofactor. Requires L-ascorbate as cofactor.

This chain is PKHD-type hydroxylase Nwi_0701, found in Nitrobacter winogradskyi (strain ATCC 25391 / DSM 10237 / CIP 104748 / NCIMB 11846 / Nb-255).